A 321-amino-acid chain; its full sequence is uncharacterized protein (321 aa).

This sequence belongs to the NAD(P)-dependent epimerase/dehydratase family.

This is an uncharacterized protein from Staphylococcus aureus (strain COL).